Reading from the N-terminus, the 300-residue chain is HTH-type transcriptional activator NahR (300 aa).

One can recognise an HTH lysR-type domain in the interval 6–63 (LDLNLLVVFNQLLVDRRVSITAENLGLTQPAVSNALKRLRTSLQDPLFVRTHQGMEPT). Positions 23–42 (VSITAENLGLTQPAVSNALK) form a DNA-binding region, H-T-H motif.

Belongs to the LysR transcriptional regulatory family.

Its subcellular location is the cytoplasm. In terms of biological role, regulates the expression of the naphthalene (nahA-F) and salicylate (nahG-M) metabolism genes. The chain is HTH-type transcriptional activator NahR (nahR) from Pseudomonas putida (Arthrobacter siderocapsulatus).